Here is a 50-residue protein sequence, read N- to C-terminus: Temporin-SHc (50 aa).

The N-terminal stretch at F1–C10 is a signal peptide. The propeptide occupies E11–R35. F48 is subject to Phenylalanine amide.

Expressed by the skin glands.

The protein resides in the secreted. It is found in the target cell membrane. Functionally, amphipathic alpha-helical antimicrobial peptide with potent activity against some Gram-positive bacteria (MIC=4-&gt;80 uM), potent activity against fungi (MIC=10-20 uM), and no activity against Gram-negative bacteria. Does not display anti-leishmania activity. Does not show hemolytic activity (LC(50)&gt;80 uM). This is Temporin-SHc from Pelophylax saharicus (Sahara frog).